Consider the following 290-residue polypeptide: Programmed cell death 1 ligand 1 (290 aa).

An N-terminal signal peptide occupies residues 1-18; it reads MRIFAVFIFMTYWHLLNA. Residues 19-127 enclose the Ig-like V-type domain; sequence FTVTVPKDLY…YGGADYKRIT (109 aa). At 19 to 238 the chain is on the extracellular side; it reads FTVTVPKDLY…LPLAHPPNER (220 aa). Asparagine 35 carries an N-linked (GlcNAc...) asparagine glycan. 2 disulfides stabilise this stretch: cysteine 40–cysteine 114 and cysteine 155–cysteine 209. An Ig-like C2-type domain is found at 133–225; sequence PYNKINQRIL…PEENHTAELV (93 aa). 3 N-linked (GlcNAc...) asparagine glycosylation sites follow: asparagine 192, asparagine 200, and asparagine 219. A helical transmembrane segment spans residues 239 to 259; that stretch reads THLVILGAILLCLGVALTFIF. Over 260-290 the chain is Cytoplasmic; sequence RLRKGRMMDVKKCGIQDTNSKKQSDTHLEET.

The protein belongs to the immunoglobulin superfamily. BTN/MOG family. In terms of assembly, interacts with PDCD1. Interacts (via transmembrane domain) with CMTM4 and CMTM6. Interacts with (phosphorylated) STAT3; promoting nuclear translocation. Interacts with CD80. May form homomultimers. Post-translationally, ubiquitinated; STUB1 likely mediates polyubiquitination of PD-L1/CD274 triggering its degradation. Ubiquitinated by MARCHF8; leading to degradation. Deubiquitinated by USP22; leading to stabilization. Highly expressed in the heart, skeletal muscle, placenta and lung. Weakly expressed in the thymus, spleen, kidney and liver. Expressed on activated T- and B-cells, dendritic cells, keratinocytes and monocytes. As to expression, widely expressed, highest in lung, liver and pituitary and in various peripheral blood cells, including neutrophils and some subtypes of lymphoid and myeloid cells.

It is found in the cell membrane. The protein resides in the early endosome membrane. The protein localises to the recycling endosome membrane. Its subcellular location is the nucleus. It localises to the endomembrane system. It is found in the secreted. In terms of biological role, plays a critical role in induction and maintenance of immune tolerance to self. As a ligand for the inhibitory receptor PDCD1/PD-1, modulates the activation threshold of T-cells and limits T-cell effector response. Through a yet unknown activating receptor, may costimulate T-cell subsets that predominantly produce interleukin-10 (IL10). Can also act as a transcription coactivator: in response to hypoxia, translocates into the nucleus via its interaction with phosphorylated STAT3 and promotes transcription of GSDMC, leading to pyroptosis. Its function is as follows. The PDCD1-mediated inhibitory pathway is exploited by tumors to attenuate anti-tumor immunity and escape destruction by the immune system, thereby facilitating tumor survival. The interaction with PDCD1/PD-1 inhibits cytotoxic T lymphocytes (CTLs) effector function. The blockage of the PDCD1-mediated pathway results in the reversal of the exhausted T-cell phenotype and the normalization of the anti-tumor response, providing a rationale for cancer immunotherapy. This chain is Programmed cell death 1 ligand 1, found in Homo sapiens (Human).